The sequence spans 44 residues: Protein PsbN (44 aa).

The chain crosses the membrane as a helical span at residues 6–26 (FFFTFFLWFLLLSVTGYSVYV).

The protein belongs to the PsbN family.

Its subcellular location is the plastid. The protein localises to the chloroplast thylakoid membrane. In terms of biological role, may play a role in photosystem I and II biogenesis. This chain is Protein PsbN, found in Chlamydomonas reinhardtii (Chlamydomonas smithii).